Consider the following 968-residue polypeptide: MPIPALPSLQQLENAEEFLARHIGIDAADEARMLPVIGSETRAELIDGIVPAAIRRAKPMRLPAPATEADALAELKAIAAKNKVFRSFIGQGYYGTHTPGVILRNVLENPAWYTAYTPYQAEISQGRMEALLNFQTMVCDLTGMAIANASMLDEATAAAEAMTLAKRSVKSKSNVFLVSGDCHPQTIEVIKTRAAPLGIEVKVSTVSETLPHLMVSGEFFGVLAQYPATTGHVHDLRPLAGHAHQCDAAFCVAADLLALTLLAPPGEWDADIVCGTTQRFGMPMCNGGPHAAYLACRDEFKRSLPGRLVGVSVDTHGQPAYRLALQTREQHIRREKATSNICTAQVLPAVVASMYAVYHGPDGLTRIAQRVAALTAILAQGLAQMGREPVNGTAFDSLTIRTGDDTPKIIERAQAAGVNLRQRLQQHLGISLDETTTRADIETLWALFVPAGTPMPRFDDLANAVPRLPEDLRRTSAFLTHPVFNTHKSETAMLRYIRSLSDKDLALDRSMIPLGSCTMKLNATSEMIPITWPEFANIHPFAPAEQLVGYAQLDAQLRAWLCEATGYAGISLQPNAGSQGEYAGLLAIRSFHEANGQGHRNICLIPSSAHGTNPASAQMVGLQVVVTACDAQGNVDMDDLRRACEKHSDKLAAVMITYPSTHGVFETRVKELCELVHEHGGRVYVDGANMNALVGVAAPGEFGGDVSHLNLHKTFCIPHGGGGPGVGPVCVVEDLVPYLPGHATAGVASNGVGAVSAAPLGNAAVLPISWMYCRMMGAKGLQAATEIAILSANYISARLKDHYPTLYASPNGHVAHECILDLRPLKDSSGVTAEDVAKRLIDYGFHAPTLSFPVPGTLMVEPTESEPLAELDRFIDAMIAIRGEIRRVEEGVWPKDDNPLKHAPHTAASLMAAEWPHPYSRELGAFPLAELKLAKYWPPIGRVDNVYGDRNLFCSCVPVGDYKETEEA.

K713 carries the post-translational modification N6-(pyridoxal phosphate)lysine.

Belongs to the GcvP family. In terms of assembly, the glycine cleavage system is composed of four proteins: P, T, L and H. It depends on pyridoxal 5'-phosphate as a cofactor.

It carries out the reaction N(6)-[(R)-lipoyl]-L-lysyl-[glycine-cleavage complex H protein] + glycine + H(+) = N(6)-[(R)-S(8)-aminomethyldihydrolipoyl]-L-lysyl-[glycine-cleavage complex H protein] + CO2. Functionally, the glycine cleavage system catalyzes the degradation of glycine. The P protein binds the alpha-amino group of glycine through its pyridoxal phosphate cofactor; CO(2) is released and the remaining methylamine moiety is then transferred to the lipoamide cofactor of the H protein. This is Glycine dehydrogenase (decarboxylating) from Variovorax paradoxus (strain S110).